The sequence spans 199 residues: Putative 3-methyladenine DNA glycosylase (199 aa).

It belongs to the DNA glycosylase MPG family.

This chain is Putative 3-methyladenine DNA glycosylase, found in Chlorobium phaeobacteroides (strain BS1).